The following is a 104-amino-acid chain: Astakine (104 aa).

An N-terminal signal peptide occupies residues 1-22 (MKMRGVSVGVLVVAMMSGLAMA). 5 disulfides stabilise this stretch: cysteine 25-cysteine 38, cysteine 32-cysteine 50, cysteine 37-cysteine 76, cysteine 60-cysteine 84, and cysteine 78-cysteine 91.

Belongs to the AVIT (prokineticin) family.

The protein localises to the secreted. Its function is as follows. Cytokine directly involved in hematopoiesis. The sequence is that of Astakine from Pacifastacus leniusculus (Signal crayfish).